The sequence spans 509 residues: Heat shock 70 kDa protein 14 (509 aa).

It belongs to the heat shock protein 70 family. Component of ribosome-associated complex (RAC), a heterodimer composed of Hsp70/DnaK-type chaperone HSPA14 and Hsp40/DnaJ-type chaperone DNAJC2.

Its subcellular location is the cytoplasm. The protein localises to the cytosol. In terms of biological role, component of the ribosome-associated complex (RAC), a complex involved in folding or maintaining nascent polypeptides in a folding-competent state. In the RAC complex, binds to the nascent polypeptide chain, while DNAJC2 stimulates its ATPase activity. The sequence is that of Heat shock 70 kDa protein 14 (HSPA14) from Pongo abelii (Sumatran orangutan).